The primary structure comprises 310 residues: Urease accessory protein UreD (310 aa).

The protein belongs to the UreD family. In terms of assembly, ureD, UreF and UreG form a complex that acts as a GTP-hydrolysis-dependent molecular chaperone, activating the urease apoprotein by helping to assemble the nickel containing metallocenter of UreC. The UreE protein probably delivers the nickel.

It is found in the cytoplasm. Functionally, required for maturation of urease via the functional incorporation of the urease nickel metallocenter. This chain is Urease accessory protein UreD, found in Synechococcus sp. (strain RCC307).